A 731-amino-acid polypeptide reads, in one-letter code: Catalase-peroxidase (731 aa).

The segment at 1-23 (MSDLKCPFSGHTGAVTPAGNTNN) is disordered. A cross-link (tryptophyl-tyrosyl-methioninium (Trp-Tyr) (with M-244)) is located at residues 95–218 (WHSAGTYRTG…LAAVEMGLIY (124 aa)). The Proton acceptor role is filled by histidine 96. Residues 218–244 (YVNPEGPHGEPDPVASGRDVRETFARM) constitute a cross-link (tryptophyl-tyrosyl-methioninium (Tyr-Met) (with W-95)). Position 259 (histidine 259) interacts with heme b.

Belongs to the peroxidase family. Peroxidase/catalase subfamily. In terms of assembly, homodimer or homotetramer. Heme b serves as cofactor. Post-translationally, formation of the three residue Trp-Tyr-Met cross-link is important for the catalase, but not the peroxidase activity of the enzyme.

It carries out the reaction H2O2 + AH2 = A + 2 H2O. The catalysed reaction is 2 H2O2 = O2 + 2 H2O. In terms of biological role, bifunctional enzyme with both catalase and broad-spectrum peroxidase activity. This chain is Catalase-peroxidase, found in Synechococcus sp. (strain WH7803).